The primary structure comprises 580 residues: Probable inactive 1-aminocyclopropane-1-carboxylate synthase-like protein 2 (580 aa).

A disordered region spans residues 1-43 (MSENRNEGSSQAAKANSDTQTPSHFKVTHPRLRDQLKKKSSKK). Over residues 7 to 23 (EGSSQAAKANSDTQTPS) the composition is skewed to polar residues. Position 417 is an N6-(pyridoxal phosphate)lysine (Lys-417).

It belongs to the class-I pyridoxal-phosphate-dependent aminotransferase family.

The sequence is that of Probable inactive 1-aminocyclopropane-1-carboxylate synthase-like protein 2 (Accsl) from Mus musculus (Mouse).